The chain runs to 448 residues: tRNA-2-methylthio-N(6)-dimethylallyladenosine synthase (448 aa).

The MTTase N-terminal domain maps to 3 to 119; sequence GRVYVKTHGC…LPEMIDRARD (117 aa). The [4Fe-4S] cluster site is built by Cys-12, Cys-49, Cys-82, Cys-156, Cys-160, and Cys-163. The 233-residue stretch at 142–374 folds into the Radical SAM core domain; that stretch reads RAEGPTAFVS…QETINANARR (233 aa). Positions 377–440 constitute a TRAM domain; it reads ESMVGTVQRV…PNSLRGELLG (64 aa).

This sequence belongs to the methylthiotransferase family. MiaB subfamily. Monomer. [4Fe-4S] cluster serves as cofactor.

It is found in the cytoplasm. It carries out the reaction N(6)-dimethylallyladenosine(37) in tRNA + (sulfur carrier)-SH + AH2 + 2 S-adenosyl-L-methionine = 2-methylsulfanyl-N(6)-dimethylallyladenosine(37) in tRNA + (sulfur carrier)-H + 5'-deoxyadenosine + L-methionine + A + S-adenosyl-L-homocysteine + 2 H(+). In terms of biological role, catalyzes the methylthiolation of N6-(dimethylallyl)adenosine (i(6)A), leading to the formation of 2-methylthio-N6-(dimethylallyl)adenosine (ms(2)i(6)A) at position 37 in tRNAs that read codons beginning with uridine. The sequence is that of tRNA-2-methylthio-N(6)-dimethylallyladenosine synthase from Alkalilimnicola ehrlichii (strain ATCC BAA-1101 / DSM 17681 / MLHE-1).